Reading from the N-terminus, the 168-residue chain is Small ribosomal subunit protein uS5c (168 aa).

Positions 17–80 constitute an S5 DRBM domain; the sequence is WSERVIQITR…SDCKKQIIEF (64 aa).

The protein belongs to the universal ribosomal protein uS5 family. As to quaternary structure, part of the 30S ribosomal subunit. Contacts protein S4.

It localises to the plastid. Its subcellular location is the chloroplast. Functionally, with S4 and S12 plays an important role in translational accuracy. This Cyanidium caldarium (Red alga) protein is Small ribosomal subunit protein uS5c (rps5).